The following is a 739-amino-acid chain: Probable endo-1,3(4)-beta-glucanase An02g00850 (739 aa).

The signal sequence occupies residues 1–24 (MPTSTLLWSVGSLALSSMVLPAAA). In terms of domain architecture, GH16 spans 31–283 (ETWKGEDFLT…WAGGVYSTSG (253 aa)). N59 and N74 each carry an N-linked (GlcNAc...) asparagine glycan. E140 acts as the Nucleophile in catalysis. E145 functions as the Proton donor in the catalytic mechanism. N-linked (GlcNAc...) asparagine glycosylation occurs at N396. Composition is skewed to low complexity over residues 431 to 442 (SEATEASNSEGS), 452 to 499 (TGAS…AGAT), and 507 to 522 (GASG…SAAA). The disordered stretch occupies residues 431-718 (SEATEASNSE…TPSTPVFTGG (288 aa)). N-linked (GlcNAc...) asparagine glycans are attached at residues N459 and N482. Polar residues predominate over residues 523-532 (TPSNVSSTGA). N-linked (GlcNAc...) asparagine glycosylation is found at N526 and N537. Polar residues predominate over residues 539–548 (SEDSSASSEA). Positions 561-587 (GASAEANGNDSASSNAATASNVSGASA) are enriched in low complexity. N-linked (GlcNAc...) asparagine glycosylation is found at N569, N581, N592, and N620. Residues 597–641 (ASAGANAGSSAAPSSVSGASAEANGSEGSSSHSSGSQAGAHSYGS) show a composition bias toward low complexity. The span at 654–673 (PSSSSHAFATAPSSTGSSRV) shows a compositional bias: polar residues. Low complexity predominate over residues 674-713 (PTSAAAANNAAAATQGSSASGSNSGSSGHGSSSATTPSTP). Residue G717 is the site of GPI-anchor amidated glycine attachment. A propeptide spans 718-739 (GANKLTLGASSVLSVLAFALLA) (removed in mature form).

This sequence belongs to the glycosyl hydrolase 16 family.

The protein resides in the cell membrane. It carries out the reaction Endohydrolysis of (1-&gt;3)- or (1-&gt;4)-linkages in beta-D-glucans when the glucose residue whose reducing group is involved in the linkage to be hydrolyzed is itself substituted at C-3.. Its function is as follows. Mixed-linked glucanase involved in the degradation of complex natural cellulosic substrates. The sequence is that of Probable endo-1,3(4)-beta-glucanase An02g00850 from Aspergillus niger (strain ATCC MYA-4892 / CBS 513.88 / FGSC A1513).